Consider the following 335-residue polypeptide: Karyogamy protein KAR4 (335 aa).

The interval 1-25 (MAFQDPTYDQNKSRHINNSHLQGPN) is disordered. Polar residues predominate over residues 16-25 (INNSHLQGPN).

Belongs to the MT-A70-like family. In terms of assembly, component of the MIS (mRNA N6-methyladenosine (m6A) methylation) complex, at least composed of IME4, KAR4, MUM2, SLZ1, and VIR1. Interacts with VIR1.

Its subcellular location is the nucleus. It is found in the cytoplasm. Its function is as follows. Component of the MIS complex, a complex that mediates N6-methyladenosine (m6A) methylation of meiotic mRNAs and is required for initiation of meiosis, progression through the meiotic divisions and sporulation. May assist STE12 in the pheromone-dependent expression of KAR3 and CIK1. This chain is Karyogamy protein KAR4 (KAR4), found in Saccharomyces cerevisiae (strain ATCC 204508 / S288c) (Baker's yeast).